The chain runs to 135 residues: Small ribosomal subunit protein uS9 (135 aa).

Residues 102 to 115 show a composition bias toward basic and acidic residues; that stretch reads PLKTEGHLSRDPRA. The tract at residues 102–135 is disordered; that stretch reads PLKTEGHLSRDPRAKERRKYGLKKARKAPQFSKR. Residues 116-135 show a composition bias toward basic residues; that stretch reads KERRKYGLKKARKAPQFSKR.

Belongs to the universal ribosomal protein uS9 family.

The sequence is that of Small ribosomal subunit protein uS9 from Synechococcus sp. (strain CC9311).